Consider the following 219-residue polypeptide: Leucyl/phenylalanyl-tRNA--protein transferase (219 aa).

This sequence belongs to the L/F-transferase family.

The protein localises to the cytoplasm. It catalyses the reaction N-terminal L-lysyl-[protein] + L-leucyl-tRNA(Leu) = N-terminal L-leucyl-L-lysyl-[protein] + tRNA(Leu) + H(+). The enzyme catalyses N-terminal L-arginyl-[protein] + L-leucyl-tRNA(Leu) = N-terminal L-leucyl-L-arginyl-[protein] + tRNA(Leu) + H(+). It carries out the reaction L-phenylalanyl-tRNA(Phe) + an N-terminal L-alpha-aminoacyl-[protein] = an N-terminal L-phenylalanyl-L-alpha-aminoacyl-[protein] + tRNA(Phe). Functions in the N-end rule pathway of protein degradation where it conjugates Leu, Phe and, less efficiently, Met from aminoacyl-tRNAs to the N-termini of proteins containing an N-terminal arginine or lysine. The chain is Leucyl/phenylalanyl-tRNA--protein transferase from Leptospira interrogans serogroup Icterohaemorrhagiae serovar copenhageni (strain Fiocruz L1-130).